A 422-amino-acid chain; its full sequence is UDP-N-acetylmuramoylalanine--D-glutamate ligase (422 aa).

Position 102-108 (102-108) interacts with ATP; it reads GTNGKTT.

Belongs to the MurCDEF family.

The protein resides in the cytoplasm. It catalyses the reaction UDP-N-acetyl-alpha-D-muramoyl-L-alanine + D-glutamate + ATP = UDP-N-acetyl-alpha-D-muramoyl-L-alanyl-D-glutamate + ADP + phosphate + H(+). Its pathway is cell wall biogenesis; peptidoglycan biosynthesis. Cell wall formation. Catalyzes the addition of glutamate to the nucleotide precursor UDP-N-acetylmuramoyl-L-alanine (UMA). This chain is UDP-N-acetylmuramoylalanine--D-glutamate ligase, found in Helicobacter pylori (strain HPAG1).